Reading from the N-terminus, the 102-residue chain is Thioredoxin (102 aa).

The Thioredoxin domain maps to methionine 1 to serine 102. The cysteines at positions 28 and 31 are disulfide-linked.

It belongs to the thioredoxin family.

Participates in various redox reactions through the reversible oxidation of its active center dithiol to a disulfide and catalyzes dithiol-disulfide exchange reactions. The polypeptide is Thioredoxin (trxA) (Chlamydia caviae (strain ATCC VR-813 / DSM 19441 / 03DC25 / GPIC) (Chlamydophila caviae)).